We begin with the raw amino-acid sequence, 151 residues long: MTIWVDADACPNVIKEILYRAAERMQLPLILVANQALRVPPSRFIRTLRVAAGFDVADNEIVRQCEAGDLVITADIPLAAEVLEKGAAALNPRGERYSDATIRERLTMCDFMDTLRASSVQTGGPNTLSPRDRQHFAAELDKWWLESQRKK.

This sequence belongs to the UPF0178 family.

The polypeptide is UPF0178 protein YaiI (Salmonella choleraesuis (strain SC-B67)).